The following is a 146-amino-acid chain: Dihydroneopterin aldolase 1 (146 aa).

Residues Glu-41, Tyr-73, and 92–93 (LE) each bind substrate. Catalysis depends on Lys-119, which acts as the Proton donor/acceptor.

It belongs to the DHNA family. As to quaternary structure, homooctamer. Forms a hollow cylinder assembled from two ring-shaped tetramers. In terms of tissue distribution, expressed in roots, leaves, stems and siliques.

The enzyme catalyses 7,8-dihydroneopterin = 6-hydroxymethyl-7,8-dihydropterin + glycolaldehyde. It participates in cofactor biosynthesis; tetrahydrofolate biosynthesis; 2-amino-4-hydroxy-6-hydroxymethyl-7,8-dihydropteridine diphosphate from 7,8-dihydroneopterin triphosphate: step 3/4. Its function is as follows. Catalyzes the conversion of 7,8-dihydroneopterin into 6-hydroxymethyl-7,8-dihydropterin, a biosynthetic precursor of the vitamin tetrahydrofolate. Can use L-threo-dihydroneopterin and D-erythro-dihydroneopterin as substrates for the formation of 6-hydroxymethyldihydropterin, but it can also catalyze the epimerization of carbon 2' of dihydroneopterin and dihydromonapterin. The polypeptide is Dihydroneopterin aldolase 1 (Arabidopsis thaliana (Mouse-ear cress)).